A 205-amino-acid chain; its full sequence is Adenylyl-sulfate kinase (205 aa).

Position 31–38 (31–38) interacts with ATP; it reads GLSGAGKS. Ser105 (phosphoserine intermediate) is an active-site residue.

It belongs to the APS kinase family.

It carries out the reaction adenosine 5'-phosphosulfate + ATP = 3'-phosphoadenylyl sulfate + ADP + H(+). It functions in the pathway sulfur metabolism; hydrogen sulfide biosynthesis; sulfite from sulfate: step 2/3. Catalyzes the synthesis of activated sulfate. This is Adenylyl-sulfate kinase from Shewanella baltica (strain OS155 / ATCC BAA-1091).